The chain runs to 528 residues: Probable rhamnogalacturonate lyase A (528 aa).

The signal sequence occupies residues 1-20; sequence MFFQTGLLLSLSLWTKVAYA. Cystine bridges form between Cys50-Cys93 and Cys184-Cys193. A glycan (N-linked (GlcNAc...) asparagine) is linked at Asn56. Asn351 carries an N-linked (GlcNAc...) asparagine glycan.

This sequence belongs to the polysaccharide lyase 4 family.

The protein resides in the secreted. The catalysed reaction is Endotype eliminative cleavage of L-alpha-rhamnopyranosyl-(1-&gt;4)-alpha-D-galactopyranosyluronic acid bonds of rhamnogalacturonan I domains in ramified hairy regions of pectin leaving L-rhamnopyranose at the reducing end and 4-deoxy-4,5-unsaturated D-galactopyranosyluronic acid at the non-reducing end.. Pectinolytic enzymes consist of four classes of enzymes: pectin lyase, polygalacturonase, pectin methylesterase and rhamnogalacturonase. Degrades the rhamnogalacturonan I (RG-I) backbone of pectin. Active against linseed rhamnogalacturonan. In Aspergillus clavatus (strain ATCC 1007 / CBS 513.65 / DSM 816 / NCTC 3887 / NRRL 1 / QM 1276 / 107), this protein is Probable rhamnogalacturonate lyase A (rglA).